The chain runs to 326 residues: Eukaryotic translation initiation factor 3 subunit I (326 aa).

WD repeat units follow at residues Gly-8 to Thr-47, Gly-50 to Ser-89, Met-145 to Asp-184, Asp-188 to Thr-227, and Gly-285 to Glu-326.

Belongs to the eIF-3 subunit I family. In terms of assembly, component of the eukaryotic translation initiation factor 3 (eIF-3) complex. The eIF-3 complex interacts with pix.

Its subcellular location is the cytoplasm. Its function is as follows. Component of the eukaryotic translation initiation factor 3 (eIF-3) complex, which is involved in protein synthesis of a specialized repertoire of mRNAs and, together with other initiation factors, stimulates binding of mRNA and methionyl-tRNAi to the 40S ribosome. The eIF-3 complex specifically targets and initiates translation of a subset of mRNAs involved in cell proliferation. In Drosophila sechellia (Fruit fly), this protein is Eukaryotic translation initiation factor 3 subunit I.